The primary structure comprises 304 residues: Coenzyme PQQ synthesis protein B (304 aa).

Belongs to the PqqB family.

The protein operates within cofactor biosynthesis; pyrroloquinoline quinone biosynthesis. Its function is as follows. May be involved in the transport of PQQ or its precursor to the periplasm. The polypeptide is Coenzyme PQQ synthesis protein B (Ectopseudomonas mendocina (strain ymp) (Pseudomonas mendocina)).